We begin with the raw amino-acid sequence, 350 residues long: Phenylalanine--tRNA ligase alpha subunit (350 aa).

Mg(2+) is bound at residue Glu257.

Belongs to the class-II aminoacyl-tRNA synthetase family. Phe-tRNA synthetase alpha subunit type 1 subfamily. In terms of assembly, tetramer of two alpha and two beta subunits. It depends on Mg(2+) as a cofactor.

It localises to the cytoplasm. The catalysed reaction is tRNA(Phe) + L-phenylalanine + ATP = L-phenylalanyl-tRNA(Phe) + AMP + diphosphate + H(+). This is Phenylalanine--tRNA ligase alpha subunit from Listeria monocytogenes serotype 4b (strain CLIP80459).